A 789-amino-acid polypeptide reads, in one-letter code: LPS-assembly protein LptD (789 aa).

The signal sequence occupies residues 1-39 (MPPRQLSQTTPSCAVVPRKRRLVAALIAVPGLMPALAHA).

Belongs to the LptD family. As to quaternary structure, component of the lipopolysaccharide transport and assembly complex. Interacts with LptE and LptA.

The protein localises to the cell outer membrane. Together with LptE, is involved in the assembly of lipopolysaccharide (LPS) at the surface of the outer membrane. This Paraburkholderia xenovorans (strain LB400) protein is LPS-assembly protein LptD.